Consider the following 115-residue polypeptide: Ribosomal protein uS4-like (115 aa).

This sequence belongs to the universal ribosomal protein uS4 family.

This Azoarcus sp. (strain BH72) protein is Ribosomal protein uS4-like.